The sequence spans 247 residues: DNA polymerase sliding clamp (247 aa).

It belongs to the PCNA family. In terms of assembly, homotrimer. The subunits circularize to form a toroid; DNA passes through its center. Replication factor C (RFC) is required to load the toroid on the DNA.

In terms of biological role, sliding clamp subunit that acts as a moving platform for DNA processing. Responsible for tethering the catalytic subunit of DNA polymerase and other proteins to DNA during high-speed replication. The polypeptide is DNA polymerase sliding clamp (Methanocorpusculum labreanum (strain ATCC 43576 / DSM 4855 / Z)).